Reading from the N-terminus, the 255-residue chain is Lactose phosphotransferase system repressor (255 aa).

Positions 3–58 (KKRRLEKILDMLKIDGTITIKEIIDELDISDMTARRDLDALEADGLLTRTHGGAQL) constitute an HTH deoR-type domain. Positions 20-39 (ITIKEIIDELDISDMTARRD) form a DNA-binding region, H-T-H motif.

Its function is as follows. Repressor of the lactose catabolism operon. Galactose-6-phosphate is the inducer. The sequence is that of Lactose phosphotransferase system repressor (lacR) from Lactococcus lactis subsp. lactis (Streptococcus lactis).